The sequence spans 257 residues: Neuroendocrine secretory protein 55 (257 aa).

A signal peptide spans 1-46 (MDRRSRAQQWRRARHNYNDLCPPIGRRAATALLWLSCSIALLRALA). Positions 61 to 257 (SFLNAHHRSA…RKGPIPIRRH (197 aa)) are disordered. Residues 70 to 82 (AAAAAAAQVLPES) show a composition bias toward low complexity. Basic and acidic residues predominate over residues 86–103 (ESDHEHEEVEPELARPEC). The span at 104–139 (LEYDQDDYETETDSETEPESDIESETEIETEPETEP) shows a compositional bias: acidic residues. Basic and acidic residues predominate over residues 200 to 211 (EPQRGPLDQDPR). Residues 227-237 (PRRCKTRRPAR) are compositionally biased toward basic residues.

The protein belongs to the NESP55 family. In terms of processing, binds keratan sulfate chains. Post-translationally, may be proteolytically processed to give rise to a number of active peptides.

It is found in the cytoplasmic vesicle. The protein localises to the secretory vesicle. It localises to the secreted. The sequence is that of Neuroendocrine secretory protein 55 from Mus musculus (Mouse).